Here is an 874-residue protein sequence, read N- to C-terminus: Bifunctional apolipoprotein N-acyltransferase/polyprenol monophosphomannose synthase (874 aa).

Positions 1–593 (MKLGAWVAAQ…GRHRATSRSY (593 aa)) are apolipoprotein N-acyltransferase. Helical transmembrane passes span 23–42 (TRLV…FPPR), 72–89 (YGLL…PWIG), 94–115 (PGPW…GLFA), 177–194 (VALV…IEKW), and 206–223 (AVVL…AAIV). Residues 241–497 (VTVAVVQGNV…PAYLDSQVRL (257 aa)) form the CN hydrolase domain. Catalysis depends on Glu-294, which acts as the Proton acceptor. The active site involves Lys-359. Cys-409 functions as the Nucleophile in the catalytic mechanism. The chain crosses the membrane as a helical span at residues 509 to 526 (PILQWILVGAAAAVVLVA). 2 disordered regions span residues 533-609 (FPRP…NRPS) and 852-874 (RARP…DVTE). Positions 594-874 (MTTGQPAPPA…SRVSRADVTE (281 aa)) are polyprenol monophosphomannose synthase.

This sequence in the N-terminal section; belongs to the CN hydrolase family. Apolipoprotein N-acyltransferase subfamily. It in the C-terminal section; belongs to the glycosyltransferase 2 family.

The protein localises to the cell membrane. It carries out the reaction N-terminal S-1,2-diacyl-sn-glyceryl-L-cysteinyl-[lipoprotein] + a glycerophospholipid = N-acyl-S-1,2-diacyl-sn-glyceryl-L-cysteinyl-[lipoprotein] + a 2-acyl-sn-glycero-3-phospholipid + H(+). It catalyses the reaction a di-trans,poly-cis-dolichyl phosphate + GDP-alpha-D-mannose = a di-trans,poly-cis-dolichyl beta-D-mannosyl phosphate + GDP. It participates in protein modification; lipoprotein biosynthesis (N-acyl transfer). Catalyzes the phospholipid dependent N-acylation of the N-terminal cysteine of apolipoprotein, the last step in lipoprotein maturation. Functionally, transfers mannose from GDP-mannose to lipid acceptors to form polyprenol monophosphomannose (PPM). PMM is an alkai-stable sugar donor which adds mannose-phosphate residues to triacylated-phosphatidyl-myo-inositol mannosides (PIM2), eventually leading to generation of the cell wall glycolipid lipoglycan modulins lipoarabinomannan (LAM) and lipomannan (LM). The polypeptide is Bifunctional apolipoprotein N-acyltransferase/polyprenol monophosphomannose synthase (Mycobacterium bovis (strain BCG / Pasteur 1173P2)).